Consider the following 498-residue polypeptide: L-amino acid oxidase Cdc18 (498 aa).

The N-terminal stretch at 1–2 (SC) is a signal peptide. Cys12 and Cys173 are disulfide-bonded. Residues 45 to 46 (MA), 65 to 66 (EA), Arg73, and 87 to 90 (GPMR) each bind FAD. Arg90 and His223 together coordinate substrate. Val263 contacts FAD. Residues Cys333 and Cys414 are joined by a disulfide bond. N-linked (GlcNAc...) asparagine glycosylation is present at Asn363. Residue Tyr374 participates in substrate binding. Residues Glu459 and 466 to 471 (GWIDST) each bind FAD. 466 to 467 (GW) contacts substrate.

It belongs to the flavin monoamine oxidase family. FIG1 subfamily. In terms of assembly, monomer. This is in contrast with most of its orthologs, that are non-covalently linked homodimers. It depends on FAD as a cofactor. In terms of tissue distribution, expressed by the venom gland.

The protein localises to the secreted. It catalyses the reaction an L-alpha-amino acid + O2 + H2O = a 2-oxocarboxylate + H2O2 + NH4(+). The enzyme catalyses L-leucine + O2 + H2O = 4-methyl-2-oxopentanoate + H2O2 + NH4(+). Functionally, catalyzes an oxidative deamination of predominantly hydrophobic and aromatic L-amino acids, thus producing hydrogen peroxide that may contribute to the diverse toxic effects of this enzyme. Shows activity on L-Leu. Damages cell membranes of the Gram-positive bacteria S.aureus (MIC=8 ug/ml and MBC=16 ug/ml) and the Gram-negative bacteria A.baumannii (MIC=16 ug/ml and MBC=32 ug/ml). This antimicrobial activity is dependent on the production of hydrogen peroxyde, since it is inhibited by catalase, a hydrogen peroxyde scavenger. The protein is L-amino acid oxidase Cdc18 of Crotalus durissus cumanensis (South American rattlesnake).